A 543-amino-acid polypeptide reads, in one-letter code: Phosphoenolpyruvate carboxykinase (ATP) (543 aa).

244-251 is an ATP binding site; that stretch reads GLSGTGKT.

It belongs to the phosphoenolpyruvate carboxykinase (ATP) family.

The catalysed reaction is oxaloacetate + ATP = phosphoenolpyruvate + ADP + CO2. The protein operates within carbohydrate biosynthesis; gluconeogenesis. The protein is Phosphoenolpyruvate carboxykinase (ATP) (PCK1) of Kluyveromyces lactis (strain ATCC 8585 / CBS 2359 / DSM 70799 / NBRC 1267 / NRRL Y-1140 / WM37) (Yeast).